Here is a 584-residue protein sequence, read N- to C-terminus: Aspartate--tRNA(Asp/Asn) ligase (584 aa).

Position 177 (glutamate 177) interacts with L-aspartate. Positions 201–204 (QLFK) are aspartate. Arginine 223 contacts L-aspartate. ATP-binding positions include 223-225 (RDE) and glutamine 232. Histidine 447 is an L-aspartate binding site. Glutamate 481 contacts ATP. Arginine 488 serves as a coordination point for L-aspartate. Position 533 to 536 (533 to 536 (GLDR)) interacts with ATP.

This sequence belongs to the class-II aminoacyl-tRNA synthetase family. Type 1 subfamily. Homodimer.

The protein localises to the cytoplasm. It catalyses the reaction tRNA(Asx) + L-aspartate + ATP = L-aspartyl-tRNA(Asx) + AMP + diphosphate. Its function is as follows. Aspartyl-tRNA synthetase with relaxed tRNA specificity since it is able to aspartylate not only its cognate tRNA(Asp) but also tRNA(Asn). Reaction proceeds in two steps: L-aspartate is first activated by ATP to form Asp-AMP and then transferred to the acceptor end of tRNA(Asp/Asn). In Chlamydia pneumoniae (Chlamydophila pneumoniae), this protein is Aspartate--tRNA(Asp/Asn) ligase.